The following is a 143-amino-acid chain: FAD synthase (143 aa).

ATP-binding positions include 9 to 10 (TF), 14 to 17 (HPGH), and Asp-92.

It belongs to the archaeal FAD synthase family. As to quaternary structure, homodimer. A divalent metal cation is required as a cofactor.

The enzyme catalyses FMN + ATP + H(+) = FAD + diphosphate. The protein operates within cofactor biosynthesis; FAD biosynthesis; FAD from FMN: step 1/1. Its function is as follows. Catalyzes the transfer of the AMP portion of ATP to flavin mononucleotide (FMN) to produce flavin adenine dinucleotide (FAD) coenzyme. This Methanococcoides burtonii (strain DSM 6242 / NBRC 107633 / OCM 468 / ACE-M) protein is FAD synthase.